A 1365-amino-acid polypeptide reads, in one-letter code: ATP-dependent RNA helicase DHX29 (1365 aa).

A compositionally biased stretch (basic residues) spans 1–10 (MGGKNKKHKA). Disordered regions lie at residues 1–74 (MGGK…NDSG), 174–222 (SQEF…EETT), and 235–257 (AEQQ…EKFD). Composition is skewed to low complexity over residues 11–36 (PGAA…VGEA) and 43–53 (ARPAPAVPTGA). A phosphoserine mark is found at Ser-69, Ser-190, and Ser-198. The segment covering 187–203 (KFQSVQIQATLSPPQQT) has biased composition (polar residues). Over residues 206 to 222 (KRQEEDPKIKPKKEETT) the composition is skewed to basic and acidic residues. Residues 281-308 (LEKNKQGQKEAQEKIRKFQREMETLEDH) are a coiled coil. The tract at residues 500 to 524 (QQQQQQQQRPESEKGGSEDPEESWE) is disordered. The Helicase ATP-binding domain maps to 581–754 (VETLKRHRVV…FTHCPILRIS (174 aa)). 594 to 601 (GETGSGKS) contributes to the ATP binding site. A DEAH box motif is present at residues 701–704 (DEVH). The region spanning 848–1025 (LILELLVYLD…ELCLHIMKCD (178 aa)) is the Helicase C-terminal domain.

This sequence belongs to the DEAD box helicase family. DEAH subfamily. In terms of assembly, part of the 43S pre-initiation complex (PIC) that contains at least Met-tRNA, EIF1, EIF1A (EIF1AX or EIF1AY), EIF2S1, EIF2S2, EIF2S3, EIF3A, EIF3B, EIF3C, EIF3D, EIF3E, EIF3F, EIF3G, EIF3H, EIF3I, EIF3J, EIF3K, EIF3L, EIF3M, DHX29 and the 40S ribosomal subunit.

The protein resides in the cytoplasm. The enzyme catalyses ATP + H2O = ADP + phosphate + H(+). Functionally, ATP-binding RNA helicase involved in translation initiation. Part of the 43S pre-initiation complex that is required for efficient initiation on mRNAs of higher eukaryotes with structured 5'-UTRs by promoting efficient NTPase-dependent 48S complex formation. Specifically binds to the 40S ribosome near the mRNA entrance. Does not possess a processive helicase activity. The sequence is that of ATP-dependent RNA helicase DHX29 from Mus musculus (Mouse).